The chain runs to 446 residues: ATP-dependent RNA helicase SUB2 (446 aa).

At S2 the chain carries N-acetylserine. A phosphoserine mark is found at S13 and S37. The segment covering 23-41 has biased composition (low complexity); that stretch reads ASKAAEAGETGAATSATEG. The disordered stretch occupies residues 23-52; the sequence is ASKAAEAGETGAATSATEGDNNNNTAAGDK. A Q motif motif is present at residues 62 to 90; the sequence is TGFKDFLLKPELSRAIIDCGFEHPSEVQQ. Positions 93-268 constitute a Helicase ATP-binding domain; sequence IPQSIHGTDV…RRFLQNPLEI (176 aa). Residue 106 to 113 coordinates ATP; that stretch reads AKSGLGKT. T169 bears the Phosphothreonine mark. Positions 215-218 match the DECD box motif; the sequence is DECD. The Helicase C-terminal domain maps to 280–441; that stretch reads GLQQYYIKLE…EFPEEGIDPS (162 aa).

Belongs to the DEAD box helicase family. DECD subfamily. Component of the TREX complex composed of at least SUB2, TEX1, YRA1 and the four THO complex components: HPR1, MFT1, THO2 and THP1. Interacts with HPR1, YRA1, and YRA2. SUB2 may mediate the interaction between the THO complex and YRA1. Associates with growing mRNP complexes during transcription. This association requires the presence of HPR1. Also interacts with SAC3. Interacts with THO1 in the presence of RNA; this interaction facilitates RNA binding of SUB2.

The protein localises to the nucleus. The enzyme catalyses ATP + H2O = ADP + phosphate + H(+). Its function is as follows. ATP-binding RNA helicase component of the TREX complex involved in transcription elongation and required for the export of mRNA out of the nucleus. SUB2 also plays a role in pre-mRNA splicing and spliceosome assembly. May be involved in rDNA and telomeric silencing, and maintenance of genome integrity. Associates with THO1, which facilitates RNA binding of SUB2 and likely plays a role in mRNA export. This chain is ATP-dependent RNA helicase SUB2 (SUB2), found in Saccharomyces cerevisiae (strain ATCC 204508 / S288c) (Baker's yeast).